The sequence spans 1368 residues: MAP3K epsilon protein kinase 1 (1368 aa).

Residues Tyr-20–Ile-274 enclose the Protein kinase domain. HEAT repeat units follow at residues Glu-25–Asn-62 and Ser-86–Ile-125. Residues Ile-26–Val-34 and Lys-49 each bind ATP. Residue Asp-144 is the Proton acceptor of the active site. The HEAT 3 repeat unit spans residues Pro-218–Lys-256. Disordered regions lie at residues Glu-296–Ser-415 and Gln-430–Asp-507. Acidic residues predominate over residues Leu-351 to Met-364. Basic and acidic residues-rich tracts occupy residues Ser-388–Thr-399 and Ser-470–Pro-486. Over residues Glu-488 to Asp-502 the composition is skewed to polar residues. 5 HEAT repeats span residues Ser-533–Leu-571, Ile-628–Glu-653, Asn-654–Leu-695, Met-699–Leu-737, and Ala-750–Ser-788. Positions Gly-777–Thr-883 are disordered. Positions Leu-791 to Met-808 are enriched in polar residues. Basic and acidic residues-rich tracts occupy residues Asp-813 to Ser-826 and Ser-836 to Arg-852. 9 HEAT repeats span residues Glu-903 to Arg-940, Ala-1025 to Thr-1063, Tyr-1067 to Cys-1105, Ala-1112 to Arg-1150, Gln-1154 to Asn-1191, Leu-1196 to Lys-1234, Arg-1258 to Leu-1281, Ala-1282 to Arg-1318, and Gln-1348 to Leu-1368.

The protein belongs to the protein kinase superfamily. Ser/Thr protein kinase family. As to quaternary structure, interacts with SGP1. Post-translationally, autophosphorylated. Expressed in both the sporophytic and the gametophytic tissues, especially in dividing cells. Mostly present in flower buds and mature flowers. Also accumulates in embryos, in roots apices, trichomes and ovule integuments.

The protein localises to the cytoplasm. Its subcellular location is the cytoskeleton. The protein resides in the microtubule organizing center. It is found in the nucleus. It localises to the nucleolus. The protein localises to the cell membrane. The enzyme catalyses L-seryl-[protein] + ATP = O-phospho-L-seryl-[protein] + ADP + H(+). The catalysed reaction is L-threonyl-[protein] + ATP = O-phospho-L-threonyl-[protein] + ADP + H(+). Serine/threonine-protein kinase involved in the spatial and temporal control system organizing cortical activities in mitotic and postmitotic cells. Required for the normal functioning of the plasma membrane in developing pollen. Involved in the regulation of cell expansion, cell elongation, and embryo development. In Arabidopsis thaliana (Mouse-ear cress), this protein is MAP3K epsilon protein kinase 1.